Consider the following 136-residue polypeptide: Large ribosomal subunit protein uL16 (136 aa).

Belongs to the universal ribosomal protein uL16 family. Part of the 50S ribosomal subunit.

Its function is as follows. Binds 23S rRNA and is also seen to make contacts with the A and possibly P site tRNAs. The polypeptide is Large ribosomal subunit protein uL16 (Ehrlichia canis (strain Jake)).